The sequence spans 421 residues: uncharacterized protein (421 aa).

4 CBS domains span residues 13 to 74 (MTKD…VRSL), 74 to 133 (LMYK…MKDT), 139 to 195 (MTRN…PKKK), and 217 to 274 (MNTP…KGAM).

This is an uncharacterized protein from Methanocaldococcus jannaschii (strain ATCC 43067 / DSM 2661 / JAL-1 / JCM 10045 / NBRC 100440) (Methanococcus jannaschii).